The primary structure comprises 454 residues: Bifunctional protein GlmU (454 aa).

Residues 1 to 230 (MSGRFAVILA…LSETMGVNDR (230 aa)) form a pyrophosphorylase region. Residues 9–12 (LAAG), K23, Q73, and 78–79 (GT) each bind UDP-N-acetyl-alpha-D-glucosamine. Residue D103 participates in Mg(2+) binding. 4 residues coordinate UDP-N-acetyl-alpha-D-glucosamine: G140, E155, N170, and N228. N228 serves as a coordination point for Mg(2+). Residues 231–251 (VALSQAEAAMRKRINEEWMRQ) are linker. Residues 252 to 454 (GVTIIDPQTT…NKDNYVKKDV (203 aa)) are N-acetyltransferase. Residues R333 and K351 each contribute to the UDP-N-acetyl-alpha-D-glucosamine site. Catalysis depends on H363, which acts as the Proton acceptor. UDP-N-acetyl-alpha-D-glucosamine is bound by residues Y366 and N377. Residues 386-387 (NY), S405, A423, and R440 each bind acetyl-CoA.

The protein in the N-terminal section; belongs to the N-acetylglucosamine-1-phosphate uridyltransferase family. This sequence in the C-terminal section; belongs to the transferase hexapeptide repeat family. In terms of assembly, homotrimer. Requires Mg(2+) as cofactor.

Its subcellular location is the cytoplasm. The enzyme catalyses alpha-D-glucosamine 1-phosphate + acetyl-CoA = N-acetyl-alpha-D-glucosamine 1-phosphate + CoA + H(+). It carries out the reaction N-acetyl-alpha-D-glucosamine 1-phosphate + UTP + H(+) = UDP-N-acetyl-alpha-D-glucosamine + diphosphate. Its pathway is nucleotide-sugar biosynthesis; UDP-N-acetyl-alpha-D-glucosamine biosynthesis; N-acetyl-alpha-D-glucosamine 1-phosphate from alpha-D-glucosamine 6-phosphate (route II): step 2/2. The protein operates within nucleotide-sugar biosynthesis; UDP-N-acetyl-alpha-D-glucosamine biosynthesis; UDP-N-acetyl-alpha-D-glucosamine from N-acetyl-alpha-D-glucosamine 1-phosphate: step 1/1. It functions in the pathway bacterial outer membrane biogenesis; LPS lipid A biosynthesis. Catalyzes the last two sequential reactions in the de novo biosynthetic pathway for UDP-N-acetylglucosamine (UDP-GlcNAc). The C-terminal domain catalyzes the transfer of acetyl group from acetyl coenzyme A to glucosamine-1-phosphate (GlcN-1-P) to produce N-acetylglucosamine-1-phosphate (GlcNAc-1-P), which is converted into UDP-GlcNAc by the transfer of uridine 5-monophosphate (from uridine 5-triphosphate), a reaction catalyzed by the N-terminal domain. The sequence is that of Bifunctional protein GlmU from Shouchella clausii (strain KSM-K16) (Alkalihalobacillus clausii).